The sequence spans 350 residues: S-adenosylmethionine:tRNA ribosyltransferase-isomerase (350 aa).

The protein belongs to the QueA family. In terms of assembly, monomer.

The protein resides in the cytoplasm. It carries out the reaction 7-aminomethyl-7-carbaguanosine(34) in tRNA + S-adenosyl-L-methionine = epoxyqueuosine(34) in tRNA + adenine + L-methionine + 2 H(+). It functions in the pathway tRNA modification; tRNA-queuosine biosynthesis. Transfers and isomerizes the ribose moiety from AdoMet to the 7-aminomethyl group of 7-deazaguanine (preQ1-tRNA) to give epoxyqueuosine (oQ-tRNA). In Bacillus cytotoxicus (strain DSM 22905 / CIP 110041 / 391-98 / NVH 391-98), this protein is S-adenosylmethionine:tRNA ribosyltransferase-isomerase.